A 149-amino-acid polypeptide reads, in one-letter code: Large ribosomal subunit protein uL15 (149 aa).

Residues 1-54 (MSLKLHNLKPTPNSRPEKHRKGRGHAAGKGKQAGKGQSGQNKRKGHRLGFEGGQ) are disordered. A compositionally biased stretch (basic residues) spans 17-28 (EKHRKGRGHAAG).

This sequence belongs to the universal ribosomal protein uL15 family. In terms of assembly, part of the 50S ribosomal subunit.

In terms of biological role, binds to the 23S rRNA. This is Large ribosomal subunit protein uL15 from Mycoplasmopsis synoviae (strain 53) (Mycoplasma synoviae).